We begin with the raw amino-acid sequence, 106 residues long: MAPLIPGELLAEPGELELNANREVTTLTVANSGDRPVQVGSHFHFQEANAALIFDRDAARGQRLDIPAGTAIRFEPGDNRDVNLIPFSGARRVVGFNGNINGPLDA.

Belongs to the urease beta subunit family. In terms of assembly, heterotrimer of UreA (gamma), UreB (beta) and UreC (alpha) subunits. Three heterotrimers associate to form the active enzyme.

It is found in the cytoplasm. It carries out the reaction urea + 2 H2O + H(+) = hydrogencarbonate + 2 NH4(+). It functions in the pathway nitrogen metabolism; urea degradation; CO(2) and NH(3) from urea (urease route): step 1/1. The chain is Urease subunit beta from Synechococcus sp. (strain CC9311).